The chain runs to 122 residues: Large ribosomal subunit protein uL14 (122 aa).

This sequence belongs to the universal ribosomal protein uL14 family. As to quaternary structure, part of the 50S ribosomal subunit. Forms a cluster with proteins L3 and L19. In the 70S ribosome, L14 and L19 interact and together make contacts with the 16S rRNA in bridges B5 and B8.

In terms of biological role, binds to 23S rRNA. Forms part of two intersubunit bridges in the 70S ribosome. The protein is Large ribosomal subunit protein uL14 of Natranaerobius thermophilus (strain ATCC BAA-1301 / DSM 18059 / JW/NM-WN-LF).